A 335-amino-acid polypeptide reads, in one-letter code: Deoxyhypusine hydroxylase (335 aa).

5 HEAT-like PBS-type repeats span residues 71–97 (LKHE…VAKD), 104–130 (CRHE…LRDN), 200–233 (LRYR…GLKD), 238–264 (FRHE…ALSN), and 271–298 (VRHE…FLND). The Fe cation site is built by His73, Glu74, His106, and Glu107. 4 residues coordinate Fe cation: His240, Glu241, His273, and Glu274.

Belongs to the deoxyhypusine hydroxylase family. Requires Fe(2+) as cofactor.

It is found in the cytoplasm. The protein localises to the nucleus. The catalysed reaction is [eIF5A protein]-deoxyhypusine + AH2 + O2 = [eIF5A protein]-hypusine + A + H2O. It functions in the pathway protein modification; eIF5A hypusination. Functionally, catalyzes the hydroxylation of the N(6)-(4-aminobutyl)-L-lysine intermediate to form hypusine, an essential post-translational modification only found in mature eIF-5A factor. This is Deoxyhypusine hydroxylase (lia1) from Aspergillus fumigatus (strain ATCC MYA-4609 / CBS 101355 / FGSC A1100 / Af293) (Neosartorya fumigata).